Reading from the N-terminus, the 158-residue chain is NAD(P)H-quinone oxidoreductase subunit J, chloroplastic (158 aa).

Belongs to the complex I 30 kDa subunit family. In terms of assembly, NDH is composed of at least 16 different subunits, 5 of which are encoded in the nucleus.

The protein resides in the plastid. The protein localises to the chloroplast thylakoid membrane. It catalyses the reaction a plastoquinone + NADH + (n+1) H(+)(in) = a plastoquinol + NAD(+) + n H(+)(out). The enzyme catalyses a plastoquinone + NADPH + (n+1) H(+)(in) = a plastoquinol + NADP(+) + n H(+)(out). NDH shuttles electrons from NAD(P)H:plastoquinone, via FMN and iron-sulfur (Fe-S) centers, to quinones in the photosynthetic chain and possibly in a chloroplast respiratory chain. The immediate electron acceptor for the enzyme in this species is believed to be plastoquinone. Couples the redox reaction to proton translocation, and thus conserves the redox energy in a proton gradient. In Spinacia oleracea (Spinach), this protein is NAD(P)H-quinone oxidoreductase subunit J, chloroplastic.